The primary structure comprises 714 residues: Mitochondrial division protein 1 (714 aa).

The stretch at 240 to 298 (LNIQKNSTLSEIRDIEVEVENLRQKKEKLLGKIANIEQNQLLLEDNLKQIDDRLDFLEE) forms a coiled coil. The tract at residues 323–354 (LKNDAIRNEGVTTESISSEASNLPPRRRQQLR) is disordered. Residues 332–343 (GVTTESISSEAS) are compositionally biased toward polar residues. S376 is subject to Phosphoserine. WD repeat units follow at residues 396-436 (THDD…KIGE), 439-478 (GHLATINCMQINRDYGTLVTGGRDAALKLWNLNLAQQLYQ), 500-539 (AHTDEVTALSLDPSFLVSGSQDRTIRQWDLRSGKCLQTID), 561-603 (TQRN…RTLK), 604-642 (GHTDAITSLKFDSACLVTGSYDRTVRIWDLRTGLLNKFH), 644-681 (YSAPVLSLDLFQENAAVVVADEPSVQIYDSEKDESWSC), and 685-714 (GNETSVSTVKYKENYMVEGRENGDVNIWAV).

This sequence belongs to the WD repeat MDV1/CAF4 family. In terms of assembly, interacts with CAF4, DNM1 and FIS1, components of the mitochondrial fission machinery. Interacts via its N-terminal, coiled-coil extension (NTE) with FIS1, and via its WD repeats with DNM1.

The protein localises to the mitochondrion outer membrane. Involved in mitochondrial fission. Has a partially redundant function to CAF4 in acting as an adapter protein, binding to FIS1 on the mitochondrial outer membrane and recruiting the dynamin-like GTPase DNM1 to form mitochondrial fission complexes. Formation of these complexes is required to promote constriction and fission of the mitochondrial compartment at a late step in mitochondrial division. The chain is Mitochondrial division protein 1 (MDV1) from Saccharomyces cerevisiae (strain YJM789) (Baker's yeast).